Reading from the N-terminus, the 172-residue chain is MGAIHDEPFTACGDETECFGGNREGSQSFHSSSTKEENLEDSYLYLVHQRSMSIFFWDERANTGVAGAVDEGKIIDFEFLNPDEKRIIEEHANKEREEGVDVILVNFDRREYMLNLRRWNMGTSPLYILVSGRYNVVKGCRLKEGNEIRIWSFHFDDQLNLAMVPLTPTESG.

Positions 69-169 form a DNA-binding region, TF-B3; that stretch reads VDEGKIIDFE…NLAMVPLTPT (101 aa).

It localises to the nucleus. In Arabidopsis thaliana (Mouse-ear cress), this protein is Putative B3 domain-containing protein At1g05615.